A 666-amino-acid chain; its full sequence is 1-deoxy-D-xylulose-5-phosphate synthase (666 aa).

Thiamine diphosphate is bound by residues H103 and 144 to 146 (AHS). D175 contacts Mg(2+). Thiamine diphosphate is bound by residues 176-177 (GA), N204, Y314, and E396. Mg(2+) is bound at residue N204.

It belongs to the transketolase family. DXPS subfamily. In terms of assembly, homodimer. The cofactor is Mg(2+). It depends on thiamine diphosphate as a cofactor.

It catalyses the reaction D-glyceraldehyde 3-phosphate + pyruvate + H(+) = 1-deoxy-D-xylulose 5-phosphate + CO2. It functions in the pathway metabolic intermediate biosynthesis; 1-deoxy-D-xylulose 5-phosphate biosynthesis; 1-deoxy-D-xylulose 5-phosphate from D-glyceraldehyde 3-phosphate and pyruvate: step 1/1. Catalyzes the acyloin condensation reaction between C atoms 2 and 3 of pyruvate and glyceraldehyde 3-phosphate to yield 1-deoxy-D-xylulose-5-phosphate (DXP). This Nitrobacter winogradskyi (strain ATCC 25391 / DSM 10237 / CIP 104748 / NCIMB 11846 / Nb-255) protein is 1-deoxy-D-xylulose-5-phosphate synthase.